Here is a 476-residue protein sequence, read N- to C-terminus: Glycogen synthase (476 aa).

Position 15 (lysine 15) interacts with ADP-alpha-D-glucose.

Belongs to the glycosyltransferase 1 family. Bacterial/plant glycogen synthase subfamily.

The enzyme catalyses [(1-&gt;4)-alpha-D-glucosyl](n) + ADP-alpha-D-glucose = [(1-&gt;4)-alpha-D-glucosyl](n+1) + ADP + H(+). It functions in the pathway glycan biosynthesis; glycogen biosynthesis. Functionally, synthesizes alpha-1,4-glucan chains using ADP-glucose. In Yersinia pseudotuberculosis serotype IB (strain PB1/+), this protein is Glycogen synthase.